Reading from the N-terminus, the 360-residue chain is Zinc metalloproteinase nas-5 (360 aa).

The N-terminal stretch at 1-21 (MDIKQLLLSIILTVSVVNGRG) is a signal peptide. The Peptidase M12A domain occupies 61-269 (NALLSNSPLR…KKVCAIYHCS (209 aa)). Asn108 is a glycosylation site (N-linked (GlcNAc...) asparagine). 2 cysteine pairs are disulfide-bonded: Cys111-Cys268 and Cys134-Cys157. His165 is a Zn(2+) binding site. Residue Glu166 is part of the active site. Zn(2+) contacts are provided by His169 and His175. One can recognise a PLAC domain in the interval 299–336 (QGDSCTDRLGICPMLKSREMLNCKVMATFCCSSCSAPT).

Zn(2+) serves as cofactor.

It is found in the secreted. In terms of biological role, metalloprotease. In Caenorhabditis elegans, this protein is Zinc metalloproteinase nas-5 (nas-5).